Reading from the N-terminus, the 113-residue chain is Integration host factor subunit alpha (113 aa).

Disordered regions lie at residues 59-80 (GNFQVRDKPPRPGRNPKTGETI) and 94-113 (QKLKSVVEQPNSPPDPASAE). Over residues 104-113 (NSPPDPASAE) the composition is skewed to pro residues.

Belongs to the bacterial histone-like protein family. As to quaternary structure, heterodimer of an alpha and a beta chain.

This protein is one of the two subunits of integration host factor, a specific DNA-binding protein that functions in genetic recombination as well as in transcriptional and translational control. This is Integration host factor subunit alpha from Bordetella pertussis (strain Tohama I / ATCC BAA-589 / NCTC 13251).